The primary structure comprises 244 residues: Nicotinamidase 1 (244 aa).

It belongs to the isochorismatase family. As to expression, expressed in roots and stems, and at lower levels in flowers, siliques and leaves.

The catalysed reaction is nicotinamide + H2O = nicotinate + NH4(+). It participates in cofactor biosynthesis; nicotinate biosynthesis; nicotinate from nicotinamide: step 1/1. Its function is as follows. Catalyzes the deamidation of nicotinamide, an early step in the NAD(+) salvage pathway. Prevents the accumulation of intracellular nicotinamide, a known inhibitor of poly(ADP-ribose) polymerases (PARP enzymes). This chain is Nicotinamidase 1, found in Arabidopsis thaliana (Mouse-ear cress).